The sequence spans 1450 residues: Arf-GAP with Rho-GAP domain, ANK repeat and PH domain-containing protein 1 (1450 aa).

One can recognise an SAM domain in the interval Asp6 to Ser70. The tract at residues Pro81–Arg90 is required for interaction with SH3KBP1. Disordered regions lie at residues Phe89–Leu144 and Thr173–Ser302. Positions Pro92–Leu102 are enriched in pro residues. Residues Gln190–Pro199 are compositionally biased toward low complexity. Over residues Gln200–Pro219 the composition is skewed to pro residues. Composition is skewed to acidic residues over residues Glu225–Glu236 and Glu269–His286. Ser229 bears the Phosphoserine mark. At Tyr231 the chain carries Phosphotyrosine; by PTK6. Positions Pro327 to Ala419 constitute a PH 1 domain. A Phosphothreonine modification is found at Thr354. At Ser428 the chain carries Phosphoserine. A phosphotyrosine mark is found at Tyr431 and Tyr504. One can recognise a PH 2 domain in the interval Gln440 to Ala529. The 126-residue stretch at Ser535–Glu660 folds into the Arf-GAP domain. The C4-type zinc finger occupies Cys550–Glu576. Ser738 carries the post-translational modification Phosphoserine. In terms of domain architecture, PH 3 spans Thr743–Val850. Positions Ala954–Phe1139 constitute a Rho-GAP domain. The Ras-associating domain maps to Gly1172–Ala1261. A PH 4 domain is found at Gly1274–His1396. Ser1428 and Ser1435 each carry phosphoserine.

Interacts with SH3KBP1/CIN85 (via SH3 domains). The interaction is independent of EGF and does not affect ARAP1 GTPase-activating activity but is involved in regulating ubiquitination and endocytic trafficking of EGFR. ARAP1 competes with E3 ubiquitin-protein ligase CBL for binding to SH3KBP1, preventing interaction of CBL with SH3KBP1; this is likely to regulate SH3KBP1-mediated internalization of EGFR. Interacts with TNFRSF10A. Phosphorylated by PTK6 following EGF stimulation which enhances EGFR signaling by delaying EGFR down-regulation; the interaction is mediated by the SH2 domain of PTK6. Phosphorylation promotes association with the Golgi apparatus and endosomes. In terms of tissue distribution, detected in heart, skeletal muscle, spleen, kidney, liver, placenta, lung, peripheral blood leukocytes, adrenal gland, bone marrow, brain, lymph node, mammary gland, prostate, spinal cord, stomach, thyroid and trachea.

Its subcellular location is the cytoplasm. The protein resides in the golgi apparatus. It is found in the trans-Golgi network. The protein localises to the golgi stack. It localises to the cell membrane. Its subcellular location is the endosome. The protein resides in the multivesicular body. It is found in the cell projection. The protein localises to the ruffle. It localises to the podosome. Its subcellular location is the early endosome. Phosphatidylinositol 3,4,5-trisphosphate-dependent GTPase-activating protein that modulates actin cytoskeleton remodeling by regulating ARF and RHO family members. Activated by phosphatidylinositol 3,4,5-trisphosphate (PtdIns(3,4,5)P3) binding and, to a lesser extent, by phosphatidylinositol 3,4-bisphosphate (PtdIns(3,4)P2) binding. Has a preference for ARF1 and ARF5. Positively regulates the ring size of circular dorsal ruffles and promotes macropinocytosis. Acts as a bridging factor in osteoclasts to control actin and membrane dynamics. Regulates the condensing of osteoclast podosomes into sealing zones which segregate the bone-facing membrane from other membrane domains and are required for osteoclast resorption activity. Also regulates recruitment of the AP-3 complex to endosomal membranes and trafficking of lysosomal membrane proteins to the ruffled membrane border of osteoclasts to modulate bone resorption. Regulates the endocytic trafficking of EGFR. Regulates the incorporation of CD63 and CD9 into multivesicular bodies. Required in the retinal pigment epithelium (RPE) for photoreceptor survival due to its role in promoting RPE phagocytosis. The sequence is that of Arf-GAP with Rho-GAP domain, ANK repeat and PH domain-containing protein 1 (ARAP1) from Homo sapiens (Human).